The following is an 82-amino-acid chain: Metallothionein-like protein 2A (82 aa).

The protein belongs to the metallothionein superfamily. Type 15 family. In terms of tissue distribution, expressed in stems, leaves, rachis, inflorescences and seeds.

In terms of biological role, metallothioneins have a high content of cysteine residues that bind various heavy metals. This is Metallothionein-like protein 2A (MT2A) from Oryza sativa subsp. japonica (Rice).